A 208-amino-acid polypeptide reads, in one-letter code: Large ribosomal subunit protein uL4 (208 aa).

A disordered region spans residues 45–89 (RQGTHAHKNRSAVSGGGKKPWRQKGTGRARQGSTRSPQWRGGGTV).

Belongs to the universal ribosomal protein uL4 family. Part of the 50S ribosomal subunit.

One of the primary rRNA binding proteins, this protein initially binds near the 5'-end of the 23S rRNA. It is important during the early stages of 50S assembly. It makes multiple contacts with different domains of the 23S rRNA in the assembled 50S subunit and ribosome. Functionally, forms part of the polypeptide exit tunnel. The sequence is that of Large ribosomal subunit protein uL4 from Lactococcus lactis subsp. cremoris (strain MG1363).